The chain runs to 272 residues: Cyclase-like protein 2 (272 aa).

Positions 1-17 (MAHLATVVLLLVAAARQ) are cleaved as a signal peptide.

It belongs to the Cyclase 1 superfamily. In terms of tissue distribution, highly expressed in leaf sheaths and flag leaves. Expressed in roots, stems, leaf collars, glumes, young panicles and pistils.

The protein resides in the secreted. It localises to the extracellular space. The protein localises to the extracellular matrix. Its function is as follows. May be involved in response to stresses. This is Cyclase-like protein 2 from Oryza sativa subsp. japonica (Rice).